The chain runs to 38 residues: Phospholipase A2 1 (38 aa).

Ca(2+) is bound by residues Tyr28, Gly30, and Gly32.

Belongs to the phospholipase A2 family. Group I subfamily. The cofactor is Ca(2+). In terms of tissue distribution, expressed by the venom gland.

The protein localises to the secreted. The enzyme catalyses a 1,2-diacyl-sn-glycero-3-phosphocholine + H2O = a 1-acyl-sn-glycero-3-phosphocholine + a fatty acid + H(+). Its function is as follows. Snake venom phospholipase A2 (PLA2) that inhibits neuromuscular transmission by blocking acetylcholine release from the nerve termini. PLA2 catalyzes the calcium-dependent hydrolysis of the 2-acyl groups in 3-sn-phosphoglycerides. The sequence is that of Phospholipase A2 1 from Calliophis bivirgatus (Blue Malaysian coral snake).